The following is a 237-amino-acid chain: MTVTNDPVVLMKQEVGKAAAQRVHSDTIIGLGTGSTTAYAIQYIGERIQTGELKNVVGVPTSFGAEVLARKYGVPLTTLDVIDKMDLAIDGADEVDPQKNLIKGGGAAHTREKIVDSLADVFIVVVDSGKLVDKLGSTFLLPVEVIPMAVTPVIKALEKLGGKTDLRMGVKKAGPVVTDQGNLVIDVKFDNIEDPANLEKTINNIPGVLENGLFVGVADLILVGEIIDGKPRVREIS.

Substrate-binding positions include 33–36 (TGST), 90–93 (DGAD), and 103–106 (KGGG). Catalysis depends on Glu-112, which acts as the Proton acceptor. Lys-130 serves as a coordination point for substrate.

The protein belongs to the ribose 5-phosphate isomerase family. In terms of assembly, homodimer.

The catalysed reaction is aldehydo-D-ribose 5-phosphate = D-ribulose 5-phosphate. Its pathway is carbohydrate degradation; pentose phosphate pathway; D-ribose 5-phosphate from D-ribulose 5-phosphate (non-oxidative stage): step 1/1. Catalyzes the reversible conversion of ribose-5-phosphate to ribulose 5-phosphate. The protein is Ribose-5-phosphate isomerase A of Gloeothece citriformis (strain PCC 7424) (Cyanothece sp. (strain PCC 7424)).